We begin with the raw amino-acid sequence, 446 residues long: Glutamate--tRNA ligase (446 aa).

Positions 9 to 19 match the 'HIGH' region motif; sequence PSPTGLLHVGN. A 'KMSKS' region motif is present at residues 240–244; it reads GLSKR. Residue lysine 243 coordinates ATP.

This sequence belongs to the class-I aminoacyl-tRNA synthetase family. Glutamate--tRNA ligase type 1 subfamily. Monomer.

It localises to the cytoplasm. It catalyses the reaction tRNA(Glu) + L-glutamate + ATP = L-glutamyl-tRNA(Glu) + AMP + diphosphate. Catalyzes the attachment of glutamate to tRNA(Glu) in a two-step reaction: glutamate is first activated by ATP to form Glu-AMP and then transferred to the acceptor end of tRNA(Glu). The chain is Glutamate--tRNA ligase from Azospirillum brasilense.